We begin with the raw amino-acid sequence, 105 residues long: Small ribosomal subunit protein uS10 (105 aa).

The protein belongs to the universal ribosomal protein uS10 family. In terms of assembly, part of the 30S ribosomal subunit.

Functionally, involved in the binding of tRNA to the ribosomes. The sequence is that of Small ribosomal subunit protein uS10 from Rickettsia conorii (strain ATCC VR-613 / Malish 7).